Consider the following 823-residue polypeptide: MGRASRSAVLRRALLLLLLLLLLRTTTTRALGPRISVPLGSEERLIRKFEAENISNYTALLLSQDGKTLYVGAREALFALNSNLSFLPGGEYQELLWSADADRKQQCSFKGKDPKRDCQNYIKILLPLNSSHLLTCGTAAFSPLCAYIHIASFTLAQDEAGNVILEDGKGRCPFDPNFKSTALVVDGELYTGTVSSFQGNDPAISRSQSSRPTKTESSLNWLQDPAFVASAYVPESLGSPIGDDDKIYFFFSETGQEFEFFENTIVSRVARVCKGDEGGERVLQQRWTSFLKAQLLCSRPDDGFPFNVLQDVFTLNPNPQDWRKTLFYGVFTSQWHRGTTEGSAICVFTMNDVQKAFDGLYKKVNRETQQWYTETHQVPTPRPGACITNSARERKINSSLQLPDRVLNFLKDHFLMDGQVRSRLLLLQPRARYQRVAVHRVPGLHSTYDVLFLGTGDGRLHKAVTLSSRVHIIEELQIFPQGQPVQNLLLDSHGGLLYASSHSGVVQVPVANCSLYPTCGDCLLARDPYCAWTGSACRLASLYQPDLASRPWTQDIEGASVKELCKNSSYKARFLVPGKPCKQVQIQPNTVNTLACPLLSNLATRLWVHNGAPVNASASCRVLPTGDLLLVGSQQGLGVFQCWSIEEGFQQLVASYCPEVMEEGVMDQKNQRDGTPVIINTSRVSAPAGGRASWGADKSYWNEFLVMCTLFVFAMVLLFLFFLYRHRDGMKLFLKQGECASVHPKTRPIVLPPETRPLNGVGPPSTPLDHRGYQALSDSSPGPRVFTESEKRPLSIQDSFVEVSPVCPRPRVRLGSEIRDSVV.

An N-terminal signal peptide occupies residues 1–30 (MGRASRSAVLRRALLLLLLLLLLRTTTTRA). The Extracellular portion of the chain corresponds to 31–703 (LGPRISVPLG…WGADKSYWNE (673 aa)). The 477-residue stretch at 34–510 (RISVPLGSEE…SHSGVVQVPV (477 aa)) folds into the Sema domain. Residues asparagine 53, asparagine 56, and asparagine 83 are each glycosylated (N-linked (GlcNAc...) asparagine). An intrachain disulfide couples cysteine 107 to cysteine 118. Asparagine 129 carries N-linked (GlcNAc...) asparagine glycosylation. 3 disulfides stabilise this stretch: cysteine 136-cysteine 145, cysteine 273-cysteine 386, and cysteine 297-cysteine 346. N-linked (GlcNAc...) asparagine glycosylation is found at asparagine 397 and asparagine 512. The region spanning 512 to 582 (NCSLYPTCGD…RFLVPGKPCK (71 aa)) is the PSI domain. A disulfide bond links cysteine 513 and cysteine 530. Asparagine 567, asparagine 615, and asparagine 680 each carry an N-linked (GlcNAc...) asparagine glycan. One can recognise an Ig-like C2-type domain in the interval 589–649 (NTVNTLACPL…FQCWSIEEGF (61 aa)). The cysteines at positions 596 and 642 are disulfide-linked. The helical transmembrane segment at 704 to 724 (FLVMCTLFVFAMVLLFLFFLY) threads the bilayer. The Cytoplasmic portion of the chain corresponds to 725-823 (RHRDGMKLFL…LGSEIRDSVV (99 aa)). Residues serine 779, serine 780, serine 804, and serine 816 each carry the phosphoserine modification.

Belongs to the semaphorin family. Interacts with GIPC PDZ domain.

Its subcellular location is the membrane. Inhibits axonal extension by providing local signals to specify territories inaccessible for growing axons. The protein is Semaphorin-4B of Mus musculus (Mouse).